A 729-amino-acid polypeptide reads, in one-letter code: Hydroxamate siderophore receptor FhuE (729 aa).

Positions 1–36 (MLSTQFNRDNQYQAITKPSLLAGCIALALLPSAAFA) are cleaved as a signal peptide. The TonB box motif lies at 42–49 (ETVIVEGS). Residues 48–72 (GSATAPDDGENDYSVTSTSAGTKMQ) form a disordered region. The span at 60–72 (YSVTSTSAGTKMQ) shows a compositional bias: polar residues. Residues 74 to 183 (TQRDIPQSVT…PSAAINMVRK (110 aa)) enclose the TBDR plug domain. Positions 117, 142, 275, 357, 373, and 416 each coordinate Fe(III)-coprogen. Residues 189–729 (EFKGDVSAEY…NFSITGTYQF (541 aa)) enclose the TBDR beta-barrel domain. The TonB C-terminal box signature appears at 712 to 729 (SIVYGTPRNFSITGTYQF).

It belongs to the TonB-dependent receptor family.

The protein resides in the cell outer membrane. In terms of biological role, involved in the active transport across the outer membrane of iron complexed with linear hydroxamate siderophores coprogen, rhodotorulic acid and ferrioxamine B. Binds Fe-coprogen with high affinity, rhodotorulic acid to a lesser extent, and weakly to ferrioxamine B. Selective for planar siderophores. Does not use cyclic siderophores ferrichrome nor ferrioxamine E as substrates. This Escherichia coli (strain K12) protein is Hydroxamate siderophore receptor FhuE.